The sequence spans 299 residues: Tyrosine recombinase XerC (299 aa).

Positions 1–85 (MERQLDAYCE…AVRGLYHYLN (85 aa)) constitute a Core-binding (CB) domain. Residues 106–285 (RLPKTLDTDR…DFQHLAAVYD (180 aa)) form the Tyr recombinase domain. Catalysis depends on residues Arg146, Lys170, His237, Arg240, and His263. Tyr272 acts as the O-(3'-phospho-DNA)-tyrosine intermediate in catalysis.

Belongs to the 'phage' integrase family. XerC subfamily. As to quaternary structure, forms a cyclic heterotetrameric complex composed of two molecules of XerC and two molecules of XerD.

The protein resides in the cytoplasm. Site-specific tyrosine recombinase, which acts by catalyzing the cutting and rejoining of the recombining DNA molecules. The XerC-XerD complex is essential to convert dimers of the bacterial chromosome into monomers to permit their segregation at cell division. It also contributes to the segregational stability of plasmids. This is Tyrosine recombinase XerC from Pseudomonas fluorescens (strain Pf0-1).